The sequence spans 141 residues: Hemoglobin subunit alpha-2 (141 aa).

Residues 1–141 form the Globin domain; sequence VLSEGNKKII…VTYQLSSLYR (141 aa). Histidine 59 provides a ligand contact to O2. Position 88 (histidine 88) interacts with heme b.

This sequence belongs to the globin family. In terms of assembly, heterotetramer of two alpha chains and two beta chains. In terms of tissue distribution, red blood cells.

In terms of biological role, involved in oxygen transport from the lung to the various peripheral tissues. The polypeptide is Hemoglobin subunit alpha-2 (Torpedo marmorata (Marbled electric ray)).